Reading from the N-terminus, the 578-residue chain is 2-succinyl-5-enolpyruvyl-6-hydroxy-3-cyclohexene-1-carboxylate synthase (578 aa).

The interval 186-208 (LPAAGGEHHPAEPRSTPWDGPVP) is disordered.

It belongs to the TPP enzyme family. MenD subfamily. Homodimer. Mg(2+) is required as a cofactor. The cofactor is Mn(2+). It depends on thiamine diphosphate as a cofactor.

It carries out the reaction isochorismate + 2-oxoglutarate + H(+) = 5-enolpyruvoyl-6-hydroxy-2-succinyl-cyclohex-3-ene-1-carboxylate + CO2. Its pathway is quinol/quinone metabolism; 1,4-dihydroxy-2-naphthoate biosynthesis; 1,4-dihydroxy-2-naphthoate from chorismate: step 2/7. It participates in cofactor biosynthesis; phylloquinone biosynthesis. Functionally, catalyzes the thiamine diphosphate-dependent decarboxylation of 2-oxoglutarate and the subsequent addition of the resulting succinic semialdehyde-thiamine pyrophosphate anion to isochorismate to yield 2-succinyl-5-enolpyruvyl-6-hydroxy-3-cyclohexene-1-carboxylate (SEPHCHC). In Synechococcus sp. (strain WH7803), this protein is 2-succinyl-5-enolpyruvyl-6-hydroxy-3-cyclohexene-1-carboxylate synthase.